A 251-amino-acid polypeptide reads, in one-letter code: Phosphoribosylaminoimidazole-succinocarboxamide synthase (251 aa).

Belongs to the SAICAR synthetase family.

The enzyme catalyses 5-amino-1-(5-phospho-D-ribosyl)imidazole-4-carboxylate + L-aspartate + ATP = (2S)-2-[5-amino-1-(5-phospho-beta-D-ribosyl)imidazole-4-carboxamido]succinate + ADP + phosphate + 2 H(+). Its pathway is purine metabolism; IMP biosynthesis via de novo pathway; 5-amino-1-(5-phospho-D-ribosyl)imidazole-4-carboxamide from 5-amino-1-(5-phospho-D-ribosyl)imidazole-4-carboxylate: step 1/2. This Phenylobacterium zucineum (strain HLK1) protein is Phosphoribosylaminoimidazole-succinocarboxamide synthase.